We begin with the raw amino-acid sequence, 422 residues long: Acylglycerol kinase, mitochondrial (422 aa).

Lys6 carries the N6-acetyllysine modification. Residues 15-31 (TTAGLCLLTWGGHWLYG) form a hydrophobic region. In terms of domain architecture, DAGKc spans 58–199 (AQVKKATVFL…LDVLQIKGEK (142 aa)). The tract at residues 249 to 271 (QASISYTGPTERPPSEPEETPVQ) is disordered.

Belongs to the AGK family. Component of the TIM22 complex, which core is composed of TIMM22, associated with TIMM10 (TIMM10A and/or TIMM10B), TIMM9, AGK and TIMM29. Interacts with SMIM26. Requires Mg(2+) as cofactor.

It localises to the mitochondrion inner membrane. The protein resides in the mitochondrion intermembrane space. It catalyses the reaction a monoacylglycerol + ATP = a monoacyl-sn-glycero-3-phosphate + ADP + H(+). It carries out the reaction a 1,2-diacyl-sn-glycerol + ATP = a 1,2-diacyl-sn-glycero-3-phosphate + ADP + H(+). The catalysed reaction is an N-acylsphing-4-enine + ATP = an N-acylsphing-4-enine 1-phosphate + ADP + H(+). The enzyme catalyses 1-(9Z-octadecenoyl)-sn-glycerol + ATP = 1-(9Z-octadecenoyl)-sn-glycero-3-phosphate + ADP + H(+). It catalyses the reaction 1,2-di-(9Z-octadecenoyl)-sn-glycerol + ATP = 1,2-di-(9Z-octadecenoyl)-sn-glycero-3-phosphate + ADP + H(+). It carries out the reaction a 1-acyl-sn-glycerol + ATP = a 1-acyl-sn-glycero-3-phosphate + ADP + H(+). The catalysed reaction is 1-hexadecanoyl-sn-glycerol + ATP = 1-hexadecanoyl-sn-glycero-3-phosphate + ADP + H(+). The enzyme catalyses a 2-acylglycerol + ATP = a 2-acyl-sn-glycerol 3-phosphate + ADP + H(+). It catalyses the reaction 2-(5Z,8Z,11Z,14Z-eicosatetraenoyl)-glycerol + ATP = 2-(5Z,8Z,11Z,14Z-eicosatetraenoyl)-sn-glycero-3-phosphate + ADP + H(+). It carries out the reaction 1-(5Z,8Z,11Z,14Z-eicosatetraenoyl)-sn-glycerol + ATP = 1-(5Z,8Z,11Z,14Z-eicosatetraenoyl)-sn-glycero-3-phosphate + ADP + H(+). The catalysed reaction is N-(hexanoyl)sphing-4-enine + ATP = N-hexanoylsphing-4-enine 1-phosphate + ADP + H(+). It participates in lipid metabolism; glycerolipid metabolism. Its function is as follows. Lipid kinase that can phosphorylate both monoacylglycerol and diacylglycerol to form lysophosphatidic acid (LPA) and phosphatidic acid (PA), respectively. Phosphorylates ceramide but not sphingosine. Phosphorylates 1,2-dioleoylglycerol more rapidly than 2,3-dioleoylglycerol. Independently of its lipid kinase activity, acts as a component of the TIM22 complex. The TIM22 complex mediates the import and insertion of multi-pass transmembrane proteins into the mitochondrial inner membrane by forming a twin-pore translocase that uses the membrane potential as the external driving force. In the TIM22 complex, required for the import of a subset of metabolite carriers into mitochondria, such as ANT1/SLC25A4 and SLC25A24, while it is not required for the import of TIMM23. Overexpression increases the formation and secretion of LPA, resulting in transactivation of EGFR and activation of the downstream MAPK signaling pathway, leading to increased cell growth. The protein is Acylglycerol kinase, mitochondrial of Pongo abelii (Sumatran orangutan).